Here is a 1867-residue protein sequence, read N- to C-terminus: TATA-binding protein-associated factor MOT1 (1867 aa).

Phosphoserine is present on Ser93. Positions 169–228 (KTDDIKQETSMLNASDKANENKSNANKKSARMLAMARRKKKMSAKNTPKHPVDITESSVS) are disordered. Over residues 181 to 203 (NASDKANENKSNANKKSARMLAM) the composition is skewed to low complexity. The short motif at 195–211 (KKSARMLAMARRKKKMS) is the Nuclear localization signal element. HEAT repeat units lie at residues 289-326 (WQFQ…KHAY), 445-482 (GLLE…EFVK), and 541-578 (WSFK…IKDD). Ser677 carries the phosphoserine modification. HEAT repeat units lie at residues 1108–1145 (SEVF…ISSV) and 1188–1225 (PYVI…LVPL). The Helicase ATP-binding domain occupies 1284 to 1457 (AFLNKYHLHG…WSLFDFLMPG (174 aa)). Residue 1297-1304 (DDMGLGKT) participates in ATP binding. Positions 1408–1411 (DEGH) match the DEGH box motif. Residues 1495–1537 (ALHKQVLPFMLRRLKEDVLSDLPPKIIQDYYCELGDLQKQLYM) form an HEAT 6 repeat. The region spanning 1639–1787 (PIQNVISQHR…STVVNQQNSG (149 aa)) is the Helicase C-terminal domain. A disordered region spans residues 1802–1822 (PDNVTSQDNEEKNNGDSQAAK).

It belongs to the SNF2/RAD54 helicase family. As to quaternary structure, forms a complex with TBP which binds TATA DNA with high affinity but with altered specificity.

It localises to the mitochondrion. Its subcellular location is the nucleus. In terms of biological role, regulates transcription in association with TATA binding protein (TBP). Removes TBP from the TATA box via its C-terminal ATPase activity. Both transcription activation and repression require its ATPase activity. This chain is TATA-binding protein-associated factor MOT1 (MOT1), found in Saccharomyces cerevisiae (strain ATCC 204508 / S288c) (Baker's yeast).